We begin with the raw amino-acid sequence, 623 residues long: Glutathione import ATP-binding protein GsiA (623 aa).

ABC transporter domains lie at valine 15 to leucine 269 and leucine 325 to methionine 564. ATP contacts are provided by residues glycine 49–serine 56 and glycine 357–serine 364.

The protein belongs to the ABC transporter superfamily. Glutathione importer (TC 3.A.1.5.11) family. In terms of assembly, the complex is composed of two ATP-binding proteins (GsiA), two transmembrane proteins (GsiC and GsiD) and a solute-binding protein (GsiB).

It is found in the cell inner membrane. It catalyses the reaction glutathione(out) + ATP + H2O = glutathione(in) + ADP + phosphate + H(+). Part of the ABC transporter complex GsiABCD involved in glutathione import. Responsible for energy coupling to the transport system. This Salmonella paratyphi A (strain ATCC 9150 / SARB42) protein is Glutathione import ATP-binding protein GsiA.